A 63-amino-acid polypeptide reads, in one-letter code: Large ribosomal subunit protein uL29 (63 aa).

This sequence belongs to the universal ribosomal protein uL29 family.

This is Large ribosomal subunit protein uL29 from Photorhabdus laumondii subsp. laumondii (strain DSM 15139 / CIP 105565 / TT01) (Photorhabdus luminescens subsp. laumondii).